The sequence spans 245 residues: Orotidine 5'-phosphate decarboxylase (245 aa).

Substrate-binding positions include aspartate 22, lysine 44, 71–80 (DLKFHDIPNT), threonine 131, arginine 192, glutamine 201, glycine 221, and arginine 222. Lysine 73 serves as the catalytic Proton donor.

Belongs to the OMP decarboxylase family. Type 1 subfamily. As to quaternary structure, homodimer.

It catalyses the reaction orotidine 5'-phosphate + H(+) = UMP + CO2. The protein operates within pyrimidine metabolism; UMP biosynthesis via de novo pathway; UMP from orotate: step 2/2. Functionally, catalyzes the decarboxylation of orotidine 5'-monophosphate (OMP) to uridine 5'-monophosphate (UMP). The protein is Orotidine 5'-phosphate decarboxylase of Escherichia coli O81 (strain ED1a).